The primary structure comprises 252 residues: Membrane protein insertase YidC (252 aa).

A signal peptide spans 1-19 (MKKVLWIIIIILMVGALAG). The N-palmitoyl cysteine moiety is linked to residue Cys-20. Cys-20 carries the S-diacylglycerol cysteine lipid modification. The next 6 membrane-spanning stretches (helical) occupy residues 34–54 (IWNHFFVYPLSWVLISVADLL), 58–78 (FGLSIIVVTIGIRLFLLPLMI), 131–151 (MAGCLPLFIQLPVMMAFYFAI), 162–182 (FLWFDLGSPDPLYILPVVAGI), 201–221 (VIIYIMPVMIVVAGVTLPSAL), and 223–243 (LYWVVGNLFMIIQTYFTVVRF).

Belongs to the OXA1/ALB3/YidC family. Type 2 subfamily.

The protein localises to the cell membrane. Functionally, required for the insertion and/or proper folding and/or complex formation of integral membrane proteins into the membrane. Involved in integration of membrane proteins that insert both dependently and independently of the Sec translocase complex, as well as at least some lipoproteins. The polypeptide is Membrane protein insertase YidC (Alkalihalophilus pseudofirmus (strain ATCC BAA-2126 / JCM 17055 / OF4) (Bacillus pseudofirmus)).